The sequence spans 158 residues: GTP-dependent dephospho-CoA kinase (158 aa).

Residues D35, V36, D54, K56, E109, and D132 each contribute to the GTP site.

It belongs to the GTP-dependent DPCK family.

It carries out the reaction 3'-dephospho-CoA + GTP = GDP + CoA + H(+). It participates in cofactor biosynthesis; coenzyme A biosynthesis. Catalyzes the GTP-dependent phosphorylation of the 3'-hydroxyl group of dephosphocoenzyme A to form coenzyme A (CoA). The chain is GTP-dependent dephospho-CoA kinase from Methanococcus maripaludis (strain C5 / ATCC BAA-1333).